The chain runs to 197 residues: Ribonuclease HII (197 aa).

The RNase H type-2 domain maps to 11-197 (HLIAGVDEVG…FAPVKKILGL (187 aa)). Asp17, Glu18, and Asp109 together coordinate a divalent metal cation.

This sequence belongs to the RNase HII family. The cofactor is Mn(2+). Mg(2+) is required as a cofactor.

It is found in the cytoplasm. It catalyses the reaction Endonucleolytic cleavage to 5'-phosphomonoester.. In terms of biological role, endonuclease that specifically degrades the RNA of RNA-DNA hybrids. The sequence is that of Ribonuclease HII from Actinobacillus pleuropneumoniae serotype 7 (strain AP76).